We begin with the raw amino-acid sequence, 239 residues long: ATP synthase subunit a, chloroplastic (239 aa).

5 consecutive transmembrane segments (helical) span residues 30-50 (VLLV…LGTF), 87-107 (VPFI…GALV), 126-146 (INTT…AGLS), 191-211 (LVVA…VMVL), and 212-232 (GLFA…SYIG).

Belongs to the ATPase A chain family. As to quaternary structure, F-type ATPases have 2 components, CF(1) - the catalytic core - and CF(0) - the membrane proton channel. CF(1) has five subunits: alpha(3), beta(3), gamma(1), delta(1), epsilon(1). CF(0) has four main subunits: a, b, b' and c.

Its subcellular location is the plastid. It localises to the chloroplast thylakoid membrane. Its function is as follows. Key component of the proton channel; it plays a direct role in the translocation of protons across the membrane. The polypeptide is ATP synthase subunit a, chloroplastic (Cyanidium caldarium (Red alga)).